We begin with the raw amino-acid sequence, 408 residues long: MVKYALLPLVAVSLVQAGGPEWHHSRTADFAVDPKVHKGCTSWINVVDASGKLTCDAFLDTINVAKRQFIFWNPQLNSDCSNIQSKASYCAFLPSHVSKQTRGQMDPPPKTKPLPPGLFNDWGNNHAQKRNDPPPKTKPLPPGLFNDWGNNGARKRDGLSPTGGLGDFHGPKEAPPPDWGHKGVVEGNHGNTMSTRSPIMGTGLPEQQSEPAFMPPHIPNLPNGMENKMVVHATTLTKKLRPTGSYVKRDANAPAPTPGSVGVAIVGCKQYHTVKAKDTCFNIAQQYPGLLFSDFLRLNPPPSNLDTVCSNLKANTRVCVKGDTKTNLVPTPSAAVGVHARDVQGWPSPTKPGTNPGCKSFELVKKGDSCEGVARKHHISVAQLKQWNPAVGPTCEKLEIGYYACVRV.

The N-terminal stretch at 1-17 is a signal peptide; the sequence is MVKYALLPLVAVSLVQA. The LysM 1 domain maps to 42-91; the sequence is SWINVVDASGKLTCDAFLDTINVAKRQFIFWNPQLNSDCSNIQSKASYCA. The disordered stretch occupies residues 98–178; sequence SKQTRGQMDP…HGPKEAPPPD (81 aa). Residues 106-116 are compositionally biased toward pro residues; the sequence is DPPPKTKPLPP. LysM domains are found at residues 270-320 and 360-406; these read QYHT…RVCV and SFEL…YACV.

Its subcellular location is the secreted. In terms of biological role, might have a role in sequestration of chitin oligosaccharides (breakdown products of fungal cell walls that are released during invasion and act as triggers of host immunity) to dampen host defense. This chain is LysM domain-containing protein ARB_01488, found in Arthroderma benhamiae (strain ATCC MYA-4681 / CBS 112371) (Trichophyton mentagrophytes).